A 365-amino-acid polypeptide reads, in one-letter code: tRNA-specific 2-thiouridylase MnmA (365 aa).

Residues 14-21 and leucine 40 contribute to the ATP site; that span reads AMSGGVDS. Cysteine 108 acts as the Nucleophile in catalysis. Cysteine 108 and cysteine 204 form a disulfide bridge. Glycine 132 is an ATP binding site. The interaction with tRNA stretch occupies residues 154-156; the sequence is KDQ. The active-site Cysteine persulfide intermediate is the cysteine 204.

This sequence belongs to the MnmA/TRMU family.

It localises to the cytoplasm. The enzyme catalyses S-sulfanyl-L-cysteinyl-[protein] + uridine(34) in tRNA + AH2 + ATP = 2-thiouridine(34) in tRNA + L-cysteinyl-[protein] + A + AMP + diphosphate + H(+). Catalyzes the 2-thiolation of uridine at the wobble position (U34) of tRNA, leading to the formation of s(2)U34. In Rickettsia rickettsii (strain Iowa), this protein is tRNA-specific 2-thiouridylase MnmA.